A 1553-amino-acid polypeptide reads, in one-letter code: Sterol 3-beta-glucosyltransferase (1553 aa).

Composition is skewed to polar residues over residues 1–10 (MASSQPTSSG) and 25–36 (LNTETSSSQHRA). Disordered stretches follow at residues 1–106 (MASS…NEED) and 189–270 (PASA…GLAP). Residues 90–100 (LPDRLKDNGKE) are compositionally biased toward basic and acidic residues. Low complexity predominate over residues 211-222 (LLQSVPSLSRLS). A compositionally biased stretch (basic residues) spans 223-232 (SSHKSKKTKQ). 2 consecutive GRAM domains span residues 323–370 (KKLK…HLPK) and 464–495 (SLQRVIFRSHNDGDSVKISIPIRNILDIEEAQ). A PH domain is found at 374–470 (EIAKSGYLSK…WVKSLQRVIF (97 aa)). 3 disordered regions span residues 542 to 569 (SPEDSGANDAPKGTGGDRAIGDNLGSPR), 611 to 662 (FSRR…FDDP), and 805 to 825 (GKKHYDHPAGRRTEREDVEDD). Over residues 633–650 (LHGDGRRSFSKPRHEPHA) the composition is skewed to basic and acidic residues. A compositionally biased stretch (polar residues) spans 651-662 (STDSYAQSFDDP). Residues 810 to 819 (DHPAGRRTER) are compositionally biased toward basic and acidic residues. In terms of domain architecture, GRAM 3 spans 834–900 (ARFQAHFALP…KDIETVDKEK (67 aa)). Residues S1020, R1021, D1023, A1328, H1330, H1343, S1346, G1347, T1348, D1367, and Q1368 each coordinate UDP-alpha-D-glucose. 2 disordered regions span residues 1446 to 1504 (KHQS…GSMS) and 1527 to 1553 (PALGSRVLSSPPTSPGAMRGAGGVKYV). The segment covering 1466–1488 (PEDDQGQAAEEDDIDADDEEEES) has biased composition (acidic residues).

The protein belongs to the glycosyltransferase 28 family.

Its subcellular location is the cytoplasm. It is found in the preautophagosomal structure membrane. It carries out the reaction a sterol + UDP-alpha-D-glucose = a sterol 3-beta-D-glucoside + UDP + H(+). The enzyme catalyses ergosterol + UDP-alpha-D-glucose = ergosteryl 3-beta-D-glucoside + UDP + H(+). In terms of biological role, sterol glycosyltransferase responsible for the glycosylation of ergosterol to form ergosterol-glucoside. The sequence is that of Sterol 3-beta-glucosyltransferase (apg-12) from Neurospora crassa (strain ATCC 24698 / 74-OR23-1A / CBS 708.71 / DSM 1257 / FGSC 987).